The following is a 70-amino-acid chain: DNA gyrase inhibitor YacG (70 aa).

Cys-21, Cys-24, Cys-36, and Cys-40 together coordinate Zn(2+).

Belongs to the DNA gyrase inhibitor YacG family. As to quaternary structure, interacts with GyrB. Requires Zn(2+) as cofactor.

Inhibits all the catalytic activities of DNA gyrase by preventing its interaction with DNA. Acts by binding directly to the C-terminal domain of GyrB, which probably disrupts DNA binding by the gyrase. This chain is DNA gyrase inhibitor YacG, found in Rhizobium meliloti (strain 1021) (Ensifer meliloti).